A 1150-amino-acid chain; its full sequence is Solute carrier family 12 member 6 (1150 aa).

Residues 1 to 108 are disordered; it reads MHPPEATTKM…GEHSQLLDDG (108 aa). Residues 1-135 are Cytoplasmic-facing; it reads MHPPEATTKM…DEYFDKNLAL (135 aa). Low complexity predominate over residues 28 to 45; sequence LSDTSPDLSSRSSSRVRF. At Ser-32 the chain carries Phosphoserine. A compositionally biased stretch (polar residues) spans 80-101; that stretch reads DRTSNPQDVTEDPSQNSITGEH. The residue at position 120 (Ser-120) is a Phosphoserine. The discontinuously helical transmembrane segment at 136 to 158 threads the bilayer; sequence FEEEMDTRPKVSSLLNRMANYTN. Positions 147 and 148 each coordinate K(+). Ser-148 carries the post-translational modification Phosphoserine. Asn-151 lines the chloride pocket. Residues 159–165 are Extracellular-facing; it reads LTQGAKE. Residues 161 to 181 are disordered; that stretch reads QGAKEHEEAENITEGKKKPTK. A compositionally biased stretch (basic and acidic residues) spans 163 to 177; the sequence is AKEHEEAENITEGKK. The chain crosses the membrane as a helical span at residues 166–188; sequence HEEAENITEGKKKPTKSPQMGTF. The Cytoplasmic segment spans residues 189–211; it reads MGVYLPCLQNIFGVILFLRLTWV. Residues 212–245 traverse the membrane as a helical segment; that stretch reads VGTAGILQAFAIVLICCCCTMLTAISMSAIATNG. The Extracellular portion of the chain corresponds to 246 to 263; that stretch reads VVPAGGSYFMISRALGPE. 2 helical membrane passes run 264–287 and 288–316; these read FGGA…ILGA and IEIF…AMLN. Tyr-283 contacts K(+). The Extracellular portion of the chain corresponds to 317 to 433; it reads NMRVYGTAFL…FVHNNVISIQ (117 aa). An intrachain disulfide couples Cys-375 to Cys-390. N-linked (GlcNAc...) asparagine glycosylation is found at Asn-379, Asn-398, Asn-411, and Asn-417. Cys-410 and Cys-420 form a disulfide bridge. The chain crosses the membrane as a helical span at residues 434-454; sequence GIPGLASGIITENLWSNYLPK. K(+) is bound by residues Ile-443, Thr-444, and Asn-446. Chloride-binding residues include Ile-443 and Thr-444. Residues Leu-447 and Trp-448 each coordinate chloride. At 455-464 the chain is on the cytoplasmic side; the sequence is GEIIEKPSAK. A helical transmembrane segment spans residues 465-487; it reads SSDVLGNLNHEYVLADITTSFTL. The Extracellular segment spans residues 488-518; it reads LVGIFFPSVTGIMAGSNRSGDLKDAQKSIPI. Residue Thr-497 participates in K(+) binding. The helical transmembrane segment at 519-545 threads the bilayer; that stretch reads GTILAILTTSFVYLSNVVLFGACIEGV. The Cytoplasmic portion of the chain corresponds to 546–568; the sequence is VLRDKFGDAVKGNLVVGTLSWPS. 2 consecutive transmembrane segments (helical) span residues 569–589 and 590–612; these read PWVI…QSLT and GAPR…VFGH. Ile-603 provides a ligand contact to chloride. Residues 613–629 lie on the Cytoplasmic side of the membrane; that stretch reads SKANGEPTWALLLTAAI. A run of 2 helical transmembrane segments spans residues 630-649 and 650-665; these read AELG…LSMF and FLMC…ALQT. Position 654 (Tyr-654) interacts with chloride. Over 666 to 1150 the chain is Cytoplasmic; sequence LLRTPNWRPR…GGSEVITIYS (485 aa). The interval 682–691 is scissor helix; it reads ALSFMGMSIC. Ser-736 is subject to Phosphoserine. Residue Thr-778 is modified to Phosphothreonine. Phosphoserine is present on Ser-981. Phosphothreonine is present on Thr-991. 3 positions are modified to phosphoserine: Ser-1023, Ser-1029, and Ser-1032. Residue Thr-1048 is modified to Phosphothreonine. Residue Tyr-1121 is modified to Phosphotyrosine.

This sequence belongs to the SLC12A transporter family. K/Cl co-transporter subfamily. As to quaternary structure, homodimer; adopts a domain-swap conformation at the scissor helices connecting the transmembrane domain and C-terminal domain. Heterodimer with K-Cl cotransporter SLC12A5. Interacts (via C-terminus) with CKB; the interaction may be required for potassium-chloride cotransport activity. Phosphorylated, phosphorylation regulates transporter activity. Phosphorylated at Thr-991 and Thr-1048 by OXSR1/OSR1 and STK39/SPAK downstream of WNK kinases (WNK1, WNK2, WNK3 or WNK4), inhibiting the potassium-chloride cotransport activity. In terms of processing, N-glycosylated. In terms of tissue distribution, expressed in hippocampus and corpus callosum (at protein level). Highly expressed throughout the brain and detected at lower levels in kidney. Highly expressed in highly myelinated white matter of the brain, but not in gray matter. Detected in the corpus callosum, in packed cell layers of the hippocampus and in Purkinje neurons within the cerebellum. Highly expressed in white matter in the spinal cord, but not in dorsal root ganglia or sciatic nerve. Colocalizes with the oligodendrocyte marker CNP. Expressed in hippocampus in CA1, and to a lesser extent CA3 pyramidal cells. Also expressed in cortex, mostly in large neurons and in the large cerebellar Purkinje cells. Highly expressed in kidney, but not detected in brain.

The protein localises to the cell membrane. It is found in the basolateral cell membrane. The catalysed reaction is K(+)(in) + chloride(in) = K(+)(out) + chloride(out). With respect to regulation, inhibited following phosphorylation by OXSR1/OSR1 and STK39/SPAK: phosphorylation takes place downstream of WNK kinases (WNK1, WNK2, WNK3 or WNK4) in response to hyperosmotic stress and subsequent cell shrinkage. Functionally, mediates electroneutral potassium-chloride cotransport when activated by cell swelling. May contribute to cell volume homeostasis in single cells. Its function is as follows. Mediates electroneutral potassium-chloride cotransport when activated by cell swelling. May contribute to cell volume homeostasis in single cells. In Mus musculus (Mouse), this protein is Solute carrier family 12 member 6 (Slc12a6).